Consider the following 165-residue polypeptide: Putative 1,2-phenylacetyl-CoA epoxidase, subunit D (165 aa).

Monomer.

It functions in the pathway aromatic compound metabolism; phenylacetate degradation. Functionally, possible component of 1,2-phenylacetyl-CoA epoxidase multicomponent enzyme system which catalyzes the reduction of phenylacetyl-CoA (PA-CoA) to form 1,2-epoxyphenylacetyl-CoA. The subunit D may have a function related to the maturation of the monooxygenase complex, rather than direct involvement in catalysis. PaaD could assist either in maturation of PaaE or PaaA. The polypeptide is Putative 1,2-phenylacetyl-CoA epoxidase, subunit D (paaD) (Escherichia coli (strain K12)).